We begin with the raw amino-acid sequence, 193 residues long: dTTP/UTP pyrophosphatase (193 aa).

D77 (proton acceptor) is an active-site residue.

It belongs to the Maf family. YhdE subfamily. The cofactor is a divalent metal cation.

It localises to the cytoplasm. It carries out the reaction dTTP + H2O = dTMP + diphosphate + H(+). The enzyme catalyses UTP + H2O = UMP + diphosphate + H(+). Functionally, nucleoside triphosphate pyrophosphatase that hydrolyzes dTTP and UTP. May have a dual role in cell division arrest and in preventing the incorporation of modified nucleotides into cellular nucleic acids. The chain is dTTP/UTP pyrophosphatase from Bacteroides thetaiotaomicron (strain ATCC 29148 / DSM 2079 / JCM 5827 / CCUG 10774 / NCTC 10582 / VPI-5482 / E50).